The following is a 1047-amino-acid chain: MAVTLDKDAYYRRVKRLYSNWRKGEDEYANVDAIVVSVGVDEEIVYAKSTALQTWLFGYELTDTIMVFCDDKIIFMASKKKVEFLKQIANTKGNENANGAPAITLLIREKNESNKSSFDKMIEAIKESKNGKKIGVFSKDKFPGEFMKSWNDCLNKEGFDKIDISAVVAYTIAVKEDGELNLMKKAASITSEVFNKFFKERVMEIVDADEKVRHSKLAESVEKAIEEKKYLAGADPSTVEMCYPPIIQSGGNYNLKFSVVSDKNHMHFGAITCAMGIRFKSYCSNLVRTLMVDPSQEVQENYNFLLQLQEELLKELRHGVKICDVYNAVMDVVKKQKPELLNKITKNLGFGMGIEFREGSLVINSKNQYKLKKGMVFSINLGFSDLTNKEGKKPEEKTYALFIGDTVLVDEDGPATVLTSVKKKVKNVGIFLKNEDEEEEEEEKDEAEDLLGRGSRAALLTERTRNEMTAEEKRRAHQKELAAQLNEEAKRRLTEQKGEQQIQKARKSNVSYKNPSLMPKEPHIREMKIYIDKKYETVIMPVFGIATPFHIATIKNISMSVEGDYTYLRINFYCPGSALGRNEGNIFPNPEATFVKEITYRASNIKAPGEQTVPALNLQNAFRIIKEVQKRYKTREAEEKEKEGIVKQDSLVINLNRSNPKLKDLYIRPNIAQKRMQGSLEAHVNGFRFTSVRGDKVDILYNNIKHALFQPCDGEMIIVLHFHLKNAIMFGKKRHTDVQFYTEVGEITTDLGKHQHMHDRDDLYAEQMEREMRHKLKTAFKNFIEKVEALTKEELEFEVPFRDLGFNGAPYRSTCLLQPTSSALVNATEWPPFVVTLDEVELIHFERVQFHLKNFDMVIVYKDYSKKVTMINAIPVASLDPIKEWLNSCDLKYTEGVQSLNWTKIMKTIVDDPEGFFEQGGWSFLEPEGEGSDAEEGDSESEIEDETFNPSEDDYEEEEEDSDEDYSSEAEESDYSKESLGSEEESGKDWDELEEEARKADRESRYEEEEEQSRSMSRKRKASVHSSGRGSNRGSRHSSAPPKKKRK.

Position 2 is an N-acetylalanine (alanine 2). Lysine 139 is subject to N6-acetyllysine. Phosphoserine is present on serine 188. Lysine 196 and lysine 223 each carry N6-acetyllysine. Positions 432–507 form a coiled coil; it reads LKNEDEEEEE…GEQQIQKARK (76 aa). Phosphoserine is present on serine 455. The disordered stretch occupies residues 492–518; it reads RLTEQKGEQQIQKARKSNVSYKNPSLM. A Glycyl lysine isopeptide (Lys-Gly) (interchain with G-Cter in SUMO2) cross-link involves residue lysine 497. Residues 499 to 514 are compositionally biased toward polar residues; sequence EQQIQKARKSNVSYKN. Phosphoserine is present on serine 508. Lysine 513 bears the N6-acetyllysine; alternate mark. Residue lysine 513 forms a Glycyl lysine isopeptide (Lys-Gly) (interchain with G-Cter in SUMO2); alternate linkage. Lysine 647 participates in a covalent cross-link: Glycyl lysine isopeptide (Lys-Gly) (interchain with G-Cter in SUMO2). Phosphoserine occurs at positions 650 and 658. Lysine 732 and lysine 786 each carry N6-acetyllysine. At threonine 903 the chain carries Phosphothreonine. Residue lysine 904 is modified to N6-acetyllysine. Residues 918–1047 form a disordered region; the sequence is EQGGWSFLEP…SSAPPKKKRK (130 aa). The segment covering 927 to 973 has biased composition (acidic residues); that stretch reads PEGEGSDAEEGDSESEIEDETFNPSEDDYEEEEEDSDEDYSSEAEES. Serine 979, serine 982, serine 986, and serine 1015 each carry phosphoserine. A compositionally biased stretch (basic and acidic residues) spans 985–1005; the sequence is ESGKDWDELEEEARKADRESR. The segment covering 1024-1039 has biased composition (low complexity); that stretch reads VHSSGRGSNRGSRHSS.

It belongs to the peptidase M24 family. SPT16 subfamily. As to quaternary structure, interacts with MYOG (via C-terminal region). Component of the FACT complex, a stable heterodimer of SSRP1 and SUPT16H. Also a component of a CK2-SPT16-SSRP1 complex which forms following UV irradiation, composed of SSRP1, SUPT16H, CSNK2A1, CSNK2A2 and CSNK2B. Interacts with NEK9. Binds to histone H2A-H2B. Identified in a centromere complex containing histones H2A, H2B and H4, and at least CENPA, CENPB, CENPC, CENPT, CENPN, HJURP, SUPT16H, SSRP1 and RSF1. Interacts with GTF2E2. (Microbial infection) Interacts with Herpes simplex virus 1 (HHV-1) protein ICP22; this interaction relocalizes the FACT complex to viral genomes in infected cells. ADP-ribosylated. ADP-ribosylation by PARP1 is induced by genotoxic stress and correlates with dissociation of FACT from chromatin. In terms of tissue distribution, ubiquitous.

It localises to the nucleus. The protein localises to the chromosome. Functionally, component of the FACT complex, a general chromatin factor that acts to reorganize nucleosomes. The FACT complex is involved in multiple processes that require DNA as a template such as mRNA elongation, DNA replication and DNA repair. During transcription elongation the FACT complex acts as a histone chaperone that both destabilizes and restores nucleosomal structure. It facilitates the passage of RNA polymerase II and transcription by promoting the dissociation of one histone H2A-H2B dimer from the nucleosome, then subsequently promotes the reestablishment of the nucleosome following the passage of RNA polymerase II. The FACT complex is probably also involved in phosphorylation of 'Ser-392' of p53/TP53 via its association with CK2 (casein kinase II). The protein is FACT complex subunit SPT16 (SUPT16H) of Homo sapiens (Human).